The following is a 231-amino-acid chain: Large ribosomal subunit protein uL1 (231 aa).

Belongs to the universal ribosomal protein uL1 family. In terms of assembly, part of the 50S ribosomal subunit.

Binds directly to 23S rRNA. The L1 stalk is quite mobile in the ribosome, and is involved in E site tRNA release. In terms of biological role, protein L1 is also a translational repressor protein, it controls the translation of the L11 operon by binding to its mRNA. The polypeptide is Large ribosomal subunit protein uL1 (Mycoplasmopsis synoviae (strain 53) (Mycoplasma synoviae)).